We begin with the raw amino-acid sequence, 721 residues long: Xylosyl- and glucuronyltransferase LARGE2 (721 aa).

At 1 to 8 the chain is on the cytoplasmic side; sequence MLPRGRPR. The helical; Signal-anchor for type II membrane protein transmembrane segment at 9–29 threads the bilayer; sequence ALGAAALLLLLLLLGFLLFGG. Topologically, residues 30 to 721 are lumenal; it reads DLGCERREPG…LQQPQSPARG (692 aa). The disordered stretch occupies residues 59–89; sequence DGRLRRAAALDGDPGAGPGDHNRSDCGPQPP. Residues Asn-80 and Asn-107 are each glycosylated (N-linked (GlcNAc...) asparagine). Residues 97 to 372 form a xylosyltransferase activity region; the sequence is LHVAIVCAGH…FLEYDGNLLR (276 aa). Mn(2+) contacts are provided by Asp-201 and Asp-203. N-linked (GlcNAc...) asparagine glycosylation occurs at Asn-231. The interval 373–715 is glucuronyltransferase activity; sequence RELFVCPSQP…LKYLPALQQP (343 aa). The Mn(2+) site is built by Asp-521 and Asp-523.

It in the C-terminal section; belongs to the glycosyltransferase 49 family. The protein in the N-terminal section; belongs to the glycosyltransferase 8 family. In terms of assembly, interacts with B4GAT1. Requires Mn(2+) as cofactor. As to expression, widely expressed. Expressed at high level in placenta, pancreas and kidney compared to LARGE. Not expressed in brain.

It is found in the golgi apparatus membrane. The catalysed reaction is 3-O-[beta-D-GlcA-(1-&gt;3)-beta-D-Xyl-(1-&gt;4)-Rib-ol-P-Rib-ol-P-3-beta-D-GalNAc-(1-&gt;3)-beta-D-GlcNAc-(1-&gt;4)-(O-6-P-alpha-D-Man)]-Thr-[protein] + UDP-alpha-D-xylose = 3-O-[alpha-D-Xyl-(1-&gt;3)-beta-D-GlcA-(1-&gt;4)-beta-D-Xyl-(1-&gt;4)-Rib-ol-P-Rib-ol-P-3-beta-D-GalNAc-(1-&gt;3)-beta-D-GlcNAc-(1-&gt;4)-(O-6-P-alpha-D-Man)]-Thr-[protein] + UDP + H(+). It carries out the reaction 3-O-{(1-&gt;[3)-alpha-D-Xyl-(1-&gt;3)-beta-D-GlcA-(1-&gt;](n)-4)-beta-D-Xyl-(1-&gt;4)-Rib-ol-P-Rib-ol-P-3-beta-D-GalNAc-(1-&gt;3)-beta-D-GlcNAc-(1-&gt;4)-O-6-P-alpha-D-Man}-L-Thr-[protein] + UDP-alpha-D-glucuronate = 3-O-{beta-D-GlcA-(1-&gt;[3)-alpha-D-Xyl-(1-&gt;3)-beta-D-GlcA-(1-&gt;](n)-4)-beta-D-Xyl-(1-&gt;4)-Rib-ol-P-Rib-ol-P-3-beta-D-GalNAc-(1-&gt;3)-beta-D-GlcNAc-(1-&gt;4)-O-6-P-alpha-D-Man}-L-Thr-[protein] + UDP + H(+). The enzyme catalyses 3-O-{beta-D-GlcA-(1-&gt;[3)-alpha-D-Xyl-(1-&gt;3)-beta-D-GlcA-(1-&gt;](n)-4)-beta-D-Xyl-(1-&gt;4)-Rib-ol-P-Rib-ol-P-3-beta-D-GalNAc-(1-&gt;3)-beta-D-GlcNAc-(1-&gt;4)-O-6-P-alpha-D-Man}-L-Thr-[protein] + UDP-alpha-D-xylose = 3-O-{(1-&gt;[3)-alpha-D-Xyl-(1-&gt;3)-beta-D-GlcA-(1-&gt;](n+1)-4)-beta-D-Xyl-(1-&gt;4)-Rib-ol-P-Rib-ol-P-3-beta-D-GalNAc-(1-&gt;3)-beta-D-GlcNAc-(1-&gt;4)-O-6-P-alpha-D-Man}-L-Thr-[protein] + UDP + H(+). It functions in the pathway protein modification; protein glycosylation. Bifunctional glycosyltransferase with both alpha-1,3-xylosyltransferase and beta-1,3-glucuronyltransferase activities involved in the maturation of alpha-dystroglycan (DAG1) by glycosylation leading to DAG1 binding to laminin G-like domain-containing extracellular proteins with high affinity and in a phosphorylated-O-mannosyl trisaccharide dependent manner. Elongates the glucuronyl-beta-1,4-xylose-beta disaccharide primer structure by adding repeating units [-3-Xylose-alpha-1,3-GlcA-beta-1-] to produce a heteropolysaccharide. Supports the maturation of DAG1 more effectively than LARGE1. In addition, can modify both heparan sulfate (HS)- and chondroitin/dermatan sulfate (CS/DS)-proteoglycans (PGs), namely GPC4, with a glycosaminoglycan (GAG)-like polysaccharide composed of xylose and glucuronic acid to confer laminin binding. The polypeptide is Xylosyl- and glucuronyltransferase LARGE2 (Homo sapiens (Human)).